Here is a 693-residue protein sequence, read N- to C-terminus: MWPQPYLPPHPMMLEESRQNKLAAAKKKLKEYQQRKSPGIPAGAKTKKKKTDSSPETTTSGGGHSPGDSQYQELAVALESSSVTISQLNENIESLKQQKKQVEHQLEEAKKTNNEIHKAQMERLETINILTLEKADLKTTLYHTKRAARHFEEESKDLAGRLQYSLQRIQELERALCAVSTQQQEEDRSSSCREAVLHRRLQQTIKERALLNAHVTQVTESLKQVQLERDEYAKHIKGERARWQERMWKMSVEARTLKEEKKRDIHRIQELERSLSELKNQMAKPPSLAPPAVTSVVEQLQDEAKHLRQEVEGLEGKLQSQVENNQALSLLSKEQKQRLQEQEEMLREQEVQRVREQERLCEQNERLREQQKTLQEQGERLRKQEQRLRKQEERLRKEEERLQKQEKRLWDQEERLWKKEERLQKQEERLALSQNHKLDKQLAEPQCSFEDLNNEKKSALQLEQQVKELQEKLDEEHLEAASQQNQQLETQLSLVALPGEGDGGQHLDSEEEEAPRPTPNIPEDLESREATSSFMDLPKEKADGTEQVERRELGFVQPSGVTDGMRESFTVYESQGAVPNTRHQEMEDVIRLAQKEEEMKVKLLELQELVLPLVGNHEGHGKFLIAAQNPADEPTPGAPAPQELGAAGEQDDFYEVSLDNNVEPAPGAAREGSPHDNPTVQQIVQLSPVMQDT.

Pro residues predominate over residues Met1–Pro11. 4 disordered regions span residues Met1–Gln72, Leu497–Arg551, Asn629–Gln650, and Asn660–Thr679. Positions Ala77 to Leu611 form a coiled coil. Residues Leu537–Arg551 are compositionally biased toward basic and acidic residues.

The protein belongs to the GOLGA6 family.

The polypeptide is Golgin subfamily A member 6B (GOLGA6B) (Homo sapiens (Human)).